A 339-amino-acid chain; its full sequence is Phosphate acyltransferase (339 aa).

This sequence belongs to the PlsX family. As to quaternary structure, homodimer. Probably interacts with PlsY.

The protein localises to the cytoplasm. The catalysed reaction is a fatty acyl-[ACP] + phosphate = an acyl phosphate + holo-[ACP]. It functions in the pathway lipid metabolism; phospholipid metabolism. Functionally, catalyzes the reversible formation of acyl-phosphate (acyl-PO(4)) from acyl-[acyl-carrier-protein] (acyl-ACP). This enzyme utilizes acyl-ACP as fatty acyl donor, but not acyl-CoA. The polypeptide is Phosphate acyltransferase (Tolumonas auensis (strain DSM 9187 / NBRC 110442 / TA 4)).